The chain runs to 313 residues: Mas-related G-protein coupled receptor member A4 (313 aa).

Topologically, residues 1 to 25 (MAPTTTNPMNETIPGSIDIETLIPN) are extracellular. Residue Asn10 is glycosylated (N-linked (GlcNAc...) asparagine). The helical transmembrane segment at 26–46 (LMIIIFGLVGLTGNVILFWLL) threads the bilayer. The Cytoplasmic segment spans residues 47-54 (GFHLHRNA). Residues 55–75 (FLVYILNLALADFLFLLCHII) form a helical membrane-spanning segment. N-linked (GlcNAc...) asparagine glycosylation occurs at Asn76. The Extracellular portion of the chain corresponds to 76–93 (NSTMLLLKVHLPNNILNH). A helical membrane pass occupies residues 94 to 114 (CFDIIMTVLYITGLSMLSAIS). Topologically, residues 115–137 (TERCLSVLCPIWYRCRRPEHTST) are cytoplasmic. A helical transmembrane segment spans residues 138-158 (VLCAVIWFLPLLICILNGYFC). Over 159-182 (HFFGPKYVIDSVCLATNFFIRTYP) the chain is Extracellular. Residues 183–203 (MFLFIVLCLSTLALLARLFCG) form a helical membrane-spanning segment. Residues 204–219 (AGKTKFTRLFVTIMLT) lie on the Cytoplasmic side of the membrane. The helical transmembrane segment at 220–240 (VLVFLLCGLPLGFFWFLVPWI) threads the bilayer. Topologically, residues 241 to 255 (NRDFSVLDYILFQTS) are extracellular. Residues 256–276 (LVLTSVNSCANPIIYFFVGSF) form a helical membrane-spanning segment. Over 277-313 (RHRLKHKTLKMVLQSALQDTPETPENMVEMSRSKAEP) the chain is Cytoplasmic.

The protein belongs to the G-protein coupled receptor 1 family. Mas subfamily. As to expression, expressed in a subset of sensory neurons that includes nociceptors. Expressed in the subclass of non-peptidergic sensory neurons that are IB4(+) and VR1(-).

Its subcellular location is the cell membrane. Functionally, orphan receptor. May be a receptor for RFamide-family neuropeptides such as NPFF and NPAF, which are analgesic in vivo. May regulate nociceptor function and/or development, including the sensation or modulation of pain. This chain is Mas-related G-protein coupled receptor member A4 (Mrgpra4), found in Mus musculus (Mouse).